The sequence spans 368 residues: DNA integrity scanning protein DisA (368 aa).

One can recognise a DAC domain in the interval 15–153; the sequence is DERLRATLAA…DGRRHVLDEP (139 aa). ATP-binding positions include Gly82, Leu100, and 113-117; that span reads TRHRS. A disordered region spans residues 101–121; it reads QPDPSIPTNESGTRHRSAERT. The segment covering 112-121 has biased composition (basic and acidic residues); that stretch reads GTRHRSAERT.

This sequence belongs to the DisA family. In terms of assembly, homooctamer. The cofactor is Mg(2+).

The enzyme catalyses 2 ATP = 3',3'-c-di-AMP + 2 diphosphate. Participates in a DNA-damage check-point. DisA forms globular foci that rapidly scan along the chromosomes searching for lesions. Its function is as follows. Also has diadenylate cyclase activity, catalyzing the condensation of 2 ATP molecules into cyclic di-AMP (c-di-AMP). c-di-AMP likely acts as a signaling molecule that may couple DNA integrity with a cellular process. In Acidothermus cellulolyticus (strain ATCC 43068 / DSM 8971 / 11B), this protein is DNA integrity scanning protein DisA.